The sequence spans 216 residues: Ribosomal RNA large subunit methyltransferase E (216 aa).

S-adenosyl-L-methionine is bound by residues Gly60, Trp62, Asp80, Asp96, and Asp121. Residue Lys161 is the Proton acceptor of the active site.

The protein belongs to the class I-like SAM-binding methyltransferase superfamily. RNA methyltransferase RlmE family.

It is found in the cytoplasm. The catalysed reaction is uridine(2552) in 23S rRNA + S-adenosyl-L-methionine = 2'-O-methyluridine(2552) in 23S rRNA + S-adenosyl-L-homocysteine + H(+). Functionally, specifically methylates the uridine in position 2552 of 23S rRNA at the 2'-O position of the ribose in the fully assembled 50S ribosomal subunit. This Pseudomonas syringae pv. syringae (strain B728a) protein is Ribosomal RNA large subunit methyltransferase E.